Reading from the N-terminus, the 231-residue chain is Orotidine 5'-phosphate decarboxylase (231 aa).

Substrate is bound by residues D11, K33, 60–69, T120, R181, Q190, G210, and R211; that span reads DLKFHDIPNT. K62 serves as the catalytic Proton donor.

This sequence belongs to the OMP decarboxylase family. Type 1 subfamily. As to quaternary structure, homodimer.

It catalyses the reaction orotidine 5'-phosphate + H(+) = UMP + CO2. It functions in the pathway pyrimidine metabolism; UMP biosynthesis via de novo pathway; UMP from orotate: step 2/2. Its function is as follows. Catalyzes the decarboxylation of orotidine 5'-monophosphate (OMP) to uridine 5'-monophosphate (UMP). The chain is Orotidine 5'-phosphate decarboxylase from Vibrio atlanticus (strain LGP32) (Vibrio splendidus (strain Mel32)).